A 424-amino-acid polypeptide reads, in one-letter code: DNA repair protein Rad60 (424 aa).

Tyrosine 26 is subject to Phosphotyrosine. A phosphoserine mark is found at serine 32 and serine 34. The interval 45–177 is disordered; the sequence is LPKKSTKTGK…LTTTTSNSAS (133 aa). The segment covering 48-57 has biased composition (basic residues); sequence KSTKTGKRKN. The segment covering 77–93 has biased composition (basic and acidic residues); it reads QAEHKAVEPEEDMRTER. Serine 96 is modified (phosphoserine). A compositionally biased stretch (basic and acidic residues) spans 104–123; that stretch reads EMEKKNGQQSDVEKHAKEND. The span at 156–166 shows a compositional bias: basic residues; the sequence is KPKKRGQKKRT. A compositionally biased stretch (low complexity) spans 167-177; that stretch reads SLTTTTSNSAS.

As to quaternary structure, forms a complex with dgrn; likely required for localization to the nuclear periphery. Interacts with the SMC5-SMC6 complex members SMC5 and SMC6/jnj following ionizing radiation (IR) to induce DNA damage. Interaction between the SMC5-SMC6 complex and the dgrn-Rad60 complex, may stabilize the association of heterochromatic DSBs with the nuclear periphery.

It localises to the nucleus. The protein localises to the nucleoplasm. In terms of biological role, required for repair of DNA double strand breaks which occur during replication or are induced by ionizing radiation (IR). Functions with dgrn and downstream of the SMC5-SMC6 complex to regulate strand break repair. Likely functions by stabilizing the association of heterochromatic double strand breaks (DSBs) with the nuclear periphery as part of the homologous recombination (HR) repair process. This Drosophila melanogaster (Fruit fly) protein is DNA repair protein Rad60.